The following is a 269-amino-acid chain: Hydroxyethylthiazole kinase (269 aa).

Residue M42 participates in substrate binding. The ATP site is built by R118 and S164. G191 provides a ligand contact to substrate.

Belongs to the Thz kinase family. It depends on Mg(2+) as a cofactor.

The catalysed reaction is 5-(2-hydroxyethyl)-4-methylthiazole + ATP = 4-methyl-5-(2-phosphooxyethyl)-thiazole + ADP + H(+). Its pathway is cofactor biosynthesis; thiamine diphosphate biosynthesis; 4-methyl-5-(2-phosphoethyl)-thiazole from 5-(2-hydroxyethyl)-4-methylthiazole: step 1/1. Catalyzes the phosphorylation of the hydroxyl group of 4-methyl-5-beta-hydroxyethylthiazole (THZ). This Listeria monocytogenes serotype 4b (strain F2365) protein is Hydroxyethylthiazole kinase.